A 306-amino-acid chain; its full sequence is Tryptophan 2,3-dioxygenase (306 aa).

A disordered region spans residues 1–33 (MQPPGDDAAPRCPFAGAHAPDAPHVPEAAGDDA). Substrate is bound by residues 75–79 (FIIQH), Tyr137, and Arg141. His264 provides a ligand contact to heme. Thr278 contacts substrate.

It belongs to the tryptophan 2,3-dioxygenase family. Homotetramer. It depends on heme as a cofactor.

The enzyme catalyses L-tryptophan + O2 = N-formyl-L-kynurenine. Its pathway is amino-acid degradation; L-tryptophan degradation via kynurenine pathway; L-kynurenine from L-tryptophan: step 1/2. Its function is as follows. Heme-dependent dioxygenase that catalyzes the oxidative cleavage of the L-tryptophan (L-Trp) pyrrole ring and converts L-tryptophan to N-formyl-L-kynurenine. Catalyzes the oxidative cleavage of the indole moiety. The chain is Tryptophan 2,3-dioxygenase from Burkholderia pseudomallei (strain 1106a).